We begin with the raw amino-acid sequence, 281 residues long: MLLEFTKMHGLGNDFMVVDLISQRAYLDTATIQRLADRHFGVGFDQLLIVEPPDVPEADFKYRIFNADGSEVEQCGNGVRCFARFVHERHLTNKTNITVQTKAGIVKPELGQNGWVRVNMGYPKFLPNEIPFVADEPEALYTLELANDQNISIDVVNMGNPHAVTIVPDVLTADVAGIGPQVELHKRFPERVNAGFMQVIDDKHVRLRVFERGVGETLACGTGACAAAVSGMRRGLLANSVEVELAGGKLQIEWQEGDVVWMTGPTTHVYDGRLDLRYFQG.

Positions 13, 46, and 66 each coordinate substrate. Cys75 (proton donor) is an active-site residue. Residues 76–77, Asn160, Asn193, and 211–212 each bind substrate; these read GN and ER. Catalysis depends on Cys220, which acts as the Proton acceptor. 221–222 contacts substrate; the sequence is GT.

Belongs to the diaminopimelate epimerase family. In terms of assembly, homodimer.

It is found in the cytoplasm. It catalyses the reaction (2S,6S)-2,6-diaminopimelate = meso-2,6-diaminopimelate. It functions in the pathway amino-acid biosynthesis; L-lysine biosynthesis via DAP pathway; DL-2,6-diaminopimelate from LL-2,6-diaminopimelate: step 1/1. In terms of biological role, catalyzes the stereoinversion of LL-2,6-diaminopimelate (L,L-DAP) to meso-diaminopimelate (meso-DAP), a precursor of L-lysine and an essential component of the bacterial peptidoglycan. The polypeptide is Diaminopimelate epimerase (Acinetobacter baumannii (strain ATCC 17978 / DSM 105126 / CIP 53.77 / LMG 1025 / NCDC KC755 / 5377)).